Here is a 313-residue protein sequence, read N- to C-terminus: Tyrosine recombinase XerC (313 aa).

The region spanning 1–85 (MNDQVEAFLR…AVKSFFAFLT (85 aa)) is the Core-binding (CB) domain. The region spanning 106–291 (DLPRALTPHQ…NHASSAQPVR (186 aa)) is the Tyr recombinase domain. Residues arginine 147, lysine 171, histidine 243, arginine 246, and histidine 269 contribute to the active site. Tyrosine 278 (O-(3'-phospho-DNA)-tyrosine intermediate) is an active-site residue.

This sequence belongs to the 'phage' integrase family. XerC subfamily. Forms a cyclic heterotetrameric complex composed of two molecules of XerC and two molecules of XerD.

It localises to the cytoplasm. Site-specific tyrosine recombinase, which acts by catalyzing the cutting and rejoining of the recombining DNA molecules. The XerC-XerD complex is essential to convert dimers of the bacterial chromosome into monomers to permit their segregation at cell division. It also contributes to the segregational stability of plasmids. The protein is Tyrosine recombinase XerC of Roseiflexus sp. (strain RS-1).